Reading from the N-terminus, the 690-residue chain is Eukaryotic translation initiation factor 3 subunit B (690 aa).

Residues 1-11 show a composition bias toward basic and acidic residues; it reads MAKKKSEEHSG. The tract at residues 1-36 is disordered; the sequence is MAKKKSEEHSGADANDSDYQEEPNFEDPPGFVDNIS. Residues 15 to 25 show a composition bias toward acidic residues; it reads NDSDYQEEPNF. Positions 57 to 141 constitute an RRM domain; it reads SVVVVDNIPK…HTFAVNLFTD (85 aa). 5 WD repeats span residues 207–246, 293–331, 334–369, 442–484, and 530–575; these read TRER…KIQK, DGMS…LLDL, IKIP…TLME, EIRE…KPSL, and PDHF…IKRT. Positions 595 to 645 form a coiled coil; that stretch reads EEKQKEIKKNLKKYYAAFEQKDRLRLTRASKELLEKRSQLRETFMEYRNKR.

It belongs to the eIF-3 subunit B family. As to quaternary structure, component of the eukaryotic translation initiation factor 3 (eIF-3) complex. The eIF-3 complex interacts with pix. Interacts with mxt.

The protein localises to the cytoplasm. Functionally, RNA-binding component of the eukaryotic translation initiation factor 3 (eIF-3) complex, which is involved in protein synthesis of a specialized repertoire of mRNAs and, together with other initiation factors, stimulates binding of mRNA and methionyl-tRNAi to the 40S ribosome. The eIF-3 complex specifically targets and initiates translation of a subset of mRNAs involved in cell proliferation. This chain is Eukaryotic translation initiation factor 3 subunit B, found in Drosophila simulans (Fruit fly).